A 570-amino-acid chain; its full sequence is Rqc2 homolog RqcH (570 aa).

The segment at 1–173 (MSFDGMFTYG…LPPAQDKISP (173 aa)) is NFACT-N domain. Residues 179 to 281 (DDILRHLSFQ…ELLDRFYFGK (103 aa)) form a hhH domain region. Coiled-coil stretches lie at residues 279–336 (FGKA…TANL) and 368–430 (TPSE…VEGK). The coiled-coil-M (CCM) stretch occupies residues 282–434 (AERDRVKQQA…ELVEGKYLRP (153 aa)). Residues 446–570 (HNPVLETYES…ADTVIKLKKS (125 aa)) are NFACT-R.

Belongs to the NEMF family. Associates with isolated or stalled 50S ribosomal subunits. Binds to RqcP. Interacts with ribosomal protein uL11. Displaced from the 50S subunit by thiostrepton. In crystallized 50S subunits RqcH is variously associated with A/P-site tRNA, P-site tRNA and RqcP, an E-site tRNA or A- and P-site tRNAs and RqcP2(YlmH).

Functionally, key component of the ribosome quality control system (RQC), a ribosome-associated complex that mediates the extraction of incompletely synthesized nascent chains from stalled ribosomes and their subsequent degradation. RqcH recruits Ala-charged tRNA, and with RqcP directs the elongation of stalled nascent chains on 50S ribosomal subunits, leading to non-templated C-terminal alanine extensions (Ala tail). The Ala tail promotes nascent chain degradation. RqcH, RqcP and charged tRNA(Ala) are necessary and sufficient to add an Ala tail to a model stalled nascent peptide; does not add Val. Binds the P-site tRNA in 50S ribosomal subunit, unwinds the anticodon stem and interacts with the splayed anticodon. Selectively binds tRNA(Ala) isoacceptors, even in the absence of the 50S ribosomal subunit. Adds between 1 and at least 8 Ala residues to the nascent chain; detection of the Ala tail requires either deletion of clpP or its inhibition. Binds to 50S ribosomal subunits, at least 30% of which contain a P-site tRNA and thus are obstructed. The polypeptide is Rqc2 homolog RqcH (Bacillus subtilis (strain 168)).